The primary structure comprises 187 residues: uncharacterized protein (187 aa).

Residues 8 to 28 (FFILLAINFILAAGFVALVLL) form a helical membrane-spanning segment.

Its subcellular location is the membrane. This is an uncharacterized protein from Bacillus subtilis (strain 168).